Consider the following 186-residue polypeptide: Ribosome-recycling factor (186 aa).

Belongs to the RRF family.

It is found in the cytoplasm. Responsible for the release of ribosomes from messenger RNA at the termination of protein biosynthesis. May increase the efficiency of translation by recycling ribosomes from one round of translation to another. The polypeptide is Ribosome-recycling factor (Polynucleobacter asymbioticus (strain DSM 18221 / CIP 109841 / QLW-P1DMWA-1) (Polynucleobacter necessarius subsp. asymbioticus)).